Here is a 338-residue protein sequence, read N- to C-terminus: D-erythrose-4-phosphate dehydrogenase (338 aa).

Residue 11-12 participates in NAD(+) binding; sequence RI. Substrate is bound by residues 153–155, R199, 212–213, and R235; these read SCT and TK. The active-site Nucleophile is the C154. N317 is a binding site for NAD(+).

This sequence belongs to the glyceraldehyde-3-phosphate dehydrogenase family. Epd subfamily. Homotetramer.

It localises to the cytoplasm. The enzyme catalyses D-erythrose 4-phosphate + NAD(+) + H2O = 4-phospho-D-erythronate + NADH + 2 H(+). The protein operates within cofactor biosynthesis; pyridoxine 5'-phosphate biosynthesis; pyridoxine 5'-phosphate from D-erythrose 4-phosphate: step 1/5. Functionally, catalyzes the NAD-dependent conversion of D-erythrose 4-phosphate to 4-phosphoerythronate. The sequence is that of D-erythrose-4-phosphate dehydrogenase from Shewanella amazonensis (strain ATCC BAA-1098 / SB2B).